A 137-amino-acid chain; its full sequence is Small ribosomal subunit protein uS11 (137 aa).

Disordered stretches follow at residues 1–32 and 118–137; these read MPPKSRASGPKKTQKSRRRDKKNVPHGNAHIK and ISDVTPQPHNGCRPPKRRRV. The segment covering 12-21 has biased composition (basic residues); sequence KTQKSRRRDK.

Belongs to the universal ribosomal protein uS11 family. Part of the 30S ribosomal subunit. Interacts with proteins S7 and S18. Binds to IF-3.

Its function is as follows. Located on the platform of the 30S subunit, it bridges several disparate RNA helices of the 16S rRNA. Forms part of the Shine-Dalgarno cleft in the 70S ribosome. The polypeptide is Small ribosomal subunit protein uS11 (Nocardia farcinica (strain IFM 10152)).